Here is a 115-residue protein sequence, read N- to C-terminus: Phosphoribosyl-AMP cyclohydrolase (115 aa).

D80 contacts Mg(2+). C81 is a binding site for Zn(2+). Residues D82 and D84 each coordinate Mg(2+). Residues C97 and C104 each contribute to the Zn(2+) site.

It belongs to the PRA-CH family. Homodimer. It depends on Mg(2+) as a cofactor. The cofactor is Zn(2+).

It is found in the cytoplasm. The catalysed reaction is 1-(5-phospho-beta-D-ribosyl)-5'-AMP + H2O = 1-(5-phospho-beta-D-ribosyl)-5-[(5-phospho-beta-D-ribosylamino)methylideneamino]imidazole-4-carboxamide. It functions in the pathway amino-acid biosynthesis; L-histidine biosynthesis; L-histidine from 5-phospho-alpha-D-ribose 1-diphosphate: step 3/9. Functionally, catalyzes the hydrolysis of the adenine ring of phosphoribosyl-AMP. This Mycolicibacterium smegmatis (strain ATCC 700084 / mc(2)155) (Mycobacterium smegmatis) protein is Phosphoribosyl-AMP cyclohydrolase.